The following is a 306-amino-acid chain: Leucine-rich repeat-containing protein 75B (306 aa).

The disordered stretch occupies residues 1-22; sequence MGARLGRRARADAPAAPSAGPA. The span at 12 to 22 shows a compositional bias: low complexity; the sequence is DAPAAPSAGPA. LRR repeat units lie at residues 173 to 186 and 198 to 211; these read LVVL…LSDE and LPRL…GNRL.

Belongs to the LRRC75 family.

Functionally, may suppress myogenic differentiation by modulating MYOG expression and Erk1/2 signaling. This chain is Leucine-rich repeat-containing protein 75B, found in Mus musculus (Mouse).